A 349-amino-acid chain; its full sequence is Isopentenyl-diphosphate delta-isomerase (349 aa).

6 to 7 (RK) serves as a coordination point for substrate. FMN contacts are provided by residues 62 to 64 (AMT), Ser-93, and Asn-122. Gln-152 serves as a coordination point for substrate. Glu-153 contacts Mg(2+). FMN is bound by residues Lys-184, Thr-214, 258 to 259 (GG), and 280 to 281 (AG).

It belongs to the IPP isomerase type 2 family. As to quaternary structure, homooctamer. Dimer of tetramers. Requires FMN as cofactor. It depends on NADPH as a cofactor. Mg(2+) is required as a cofactor.

It is found in the cytoplasm. The enzyme catalyses isopentenyl diphosphate = dimethylallyl diphosphate. In terms of biological role, involved in the biosynthesis of isoprenoids. Catalyzes the 1,3-allylic rearrangement of the homoallylic substrate isopentenyl (IPP) to its allylic isomer, dimethylallyl diphosphate (DMAPP). In Bacillus cereus (strain AH187), this protein is Isopentenyl-diphosphate delta-isomerase.